Reading from the N-terminus, the 130-residue chain is Large ribosomal subunit protein bL20 (130 aa).

Belongs to the bacterial ribosomal protein bL20 family.

Its function is as follows. Binds directly to 23S ribosomal RNA and is necessary for the in vitro assembly process of the 50S ribosomal subunit. It is not involved in the protein synthesizing functions of that subunit. This Leifsonia xyli subsp. xyli (strain CTCB07) protein is Large ribosomal subunit protein bL20.